A 647-amino-acid chain; its full sequence is Epithelial sodium channel subunit beta (647 aa).

The Cytoplasmic segment spans residues 1–57; that stretch reads MIHGKMKRLKRYFTRALHRIQKGPGYTYKELLVWFCDNTNTHGPKRIIKEGPKKRVM. Residues 58 to 78 traverse the membrane as a helical segment; sequence WFILTLVFAGLVFWQWGVLIL. Residues 79 to 552 are Extracellular-facing; the sequence is TYLSYGVSVS…GGQFGFWMGG (474 aa). 8 disulfides stabilise this stretch: Cys104-Cys291, Cys215-Cys222, Cys268-Cys275, Cys381-Cys468, Cys406-Cys464, Cys410-Cys460, Cys419-Cys446, and Cys421-Cys435. A helical transmembrane segment spans residues 553–573; it reads SVLCIIEFGEIIIDCMWITIL. The Cytoplasmic portion of the chain corresponds to 574 to 647; sequence KFLAWSRNRR…AEPVSSDEEN (74 aa). The interval 586–647 is disordered; the sequence is RKRPQYSDPP…AEPVSSDEEN (62 aa).

It belongs to the amiloride-sensitive sodium channel (TC 1.A.6) family. SCNN1B subfamily. In terms of assembly, component of the heterotrimeric epithelial sodium channel (ENaC) composed of an alpha/SCNN1A, a beta/SCNN1B and a gamma/SCNN1G subunit.

The protein localises to the apical cell membrane. It is found in the cytoplasmic vesicle membrane. The enzyme catalyses Na(+)(in) = Na(+)(out). Originally identified and characterized by its inhibition by the diuretic drug amiloride. Functionally, this is one of the three pore-forming subunits of the heterotrimeric epithelial sodium channel (ENaC), a critical regulator of sodium balance and fluid homeostasis. ENaC operates in epithelial tissues, where it mediates the electrodiffusion of sodium ions from extracellular fluid through the apical membrane of cells, with water following osmotically. The polypeptide is Epithelial sodium channel subunit beta (scnn1b-a) (Xenopus laevis (African clawed frog)).